The following is a 621-amino-acid chain: Chaperone protein HscA homolog (621 aa).

Belongs to the heat shock protein 70 family.

Its function is as follows. Chaperone involved in the maturation of iron-sulfur cluster-containing proteins. Has a low intrinsic ATPase activity which is markedly stimulated by HscB. This chain is Chaperone protein HscA homolog, found in Ralstonia nicotianae (strain ATCC BAA-1114 / GMI1000) (Ralstonia solanacearum).